The following is a 170-amino-acid chain: Peptide methionine sulfoxide reductase MsrA (170 aa).

Cysteine 13 is a catalytic residue.

Belongs to the MsrA Met sulfoxide reductase family.

It catalyses the reaction L-methionyl-[protein] + [thioredoxin]-disulfide + H2O = L-methionyl-(S)-S-oxide-[protein] + [thioredoxin]-dithiol. The enzyme catalyses [thioredoxin]-disulfide + L-methionine + H2O = L-methionine (S)-S-oxide + [thioredoxin]-dithiol. Has an important function as a repair enzyme for proteins that have been inactivated by oxidation. Catalyzes the reversible oxidation-reduction of methionine sulfoxide in proteins to methionine. The sequence is that of Peptide methionine sulfoxide reductase MsrA from Nocardia farcinica (strain IFM 10152).